The sequence spans 470 residues: Aminoacyl transferase sphA (470 aa).

S212, H244, and T272 together coordinate pyridoxal 5'-phosphate. K275 is subject to N6-(pyridoxal phosphate)lysine.

The protein belongs to the class-II pyridoxal-phosphate-dependent aminotransferase family. BioF subfamily. Homodimer. Requires pyridoxal 5'-phosphate as cofactor.

The enzyme catalyses aminomalonate + (3R)-hydroxyoctadeca-4,10-dienoyl-[ACP] = 3-oxopresphingofungin + holo-[ACP] + CO2. It participates in secondary metabolite biosynthesis. In terms of biological role, aminoacyl transferase; part of the gene cluster that mediates the biosynthesis of sphingofungins, bioactive molecules acting as sphingolipid inhibitors via inhibiting serine palmitoyl transferase (SPT). Within the pathway, sphA transfers aminomalonate onto the sphB product 3-hydroxyoctadeca-4,10-dienoyl-ACP to produce 3-keto-presphingofungin. The substrate specificity of sphA using only aminomalonate in Aspergillus fumigatus is responsible for the biosynthesis of sphingofungins B and C but not E and F like in Byssochlamys spectabilis. The PKS sphB does not contain any putative thioesterase domain for releasing the nascent polyketide chain and it has been suggested that aminoacyl transferases can facilitate the polyketide chain release. Sphingofungin biosynthesis starts with the PKS sphB that produces an C18 polyketide precursor 3-hydroxyoctadeca-4,10-dienoyl-ACP containing one delta-6 desaturation and one delta-12 desaturation. The aminoacyl transferase sphA uses the sphB product to produce 3-keto-presphingofungin by adding an aminomalonate molecule. SphF then reduces the C-3 ketone of 3-keto-presphingofungin which leads to presphingofungin. The cytochrome P450 monooxygenase sphH converts presphingofungin into sphingofungin B1 which is further converted to sphingofungin B by the dioxygenase sphC. SphC is also able to convert presphingofungin into sphingofungin B2. The acetyltransferase sphE acetylates sphingofungin B to produce sphingofungin C, but can also convert sphingofungin B1 into sphingofungin C1 and sphingofungin B2 into sphingofungin C2. Finally, sphingofungin C can be spontaneously converted into sphingofungin D. The polypeptide is Aminoacyl transferase sphA (Aspergillus fumigatus (strain CBS 144.89 / FGSC A1163 / CEA10) (Neosartorya fumigata)).